The sequence spans 534 residues: Peptide chain release factor 3 (534 aa).

In terms of domain architecture, tr-type G spans 9–278 (ARRRTFAIIS…FFVEHAPSPQ (270 aa)). Residues 18–25 (SHPDAGKT), 86–90 (DTPGH), and 140–143 (NKLD) contribute to the GTP site.

This sequence belongs to the TRAFAC class translation factor GTPase superfamily. Classic translation factor GTPase family. PrfC subfamily.

It is found in the cytoplasm. In terms of biological role, increases the formation of ribosomal termination complexes and stimulates activities of RF-1 and RF-2. It binds guanine nucleotides and has strong preference for UGA stop codons. It may interact directly with the ribosome. The stimulation of RF-1 and RF-2 is significantly reduced by GTP and GDP, but not by GMP. In Xylella fastidiosa (strain M23), this protein is Peptide chain release factor 3.